The primary structure comprises 430 residues: Lipoyl synthase, mitochondrial (430 aa).

The transit peptide at 1–29 (MASPVPIQRLQAPLRRSLARAAALSTRSY) directs the protein to the mitochondrion. Positions 28–58 (SYATIPSGPSSQPTSQESSSAASASAPATKP) are enriched in low complexity. Residues 28–62 (SYATIPSGPSSQPTSQESSSAASASAPATKPRPTY) form a disordered region. C142, C147, C153, C173, C177, C180, and S390 together coordinate [4Fe-4S] cluster. The region spanning 156-379 (GSNKAAATAT…RQRALDMGFL (224 aa)) is the Radical SAM core domain.

The protein belongs to the radical SAM superfamily. Lipoyl synthase family. [4Fe-4S] cluster is required as a cofactor.

Its subcellular location is the mitochondrion. It catalyses the reaction [[Fe-S] cluster scaffold protein carrying a second [4Fe-4S](2+) cluster] + N(6)-octanoyl-L-lysyl-[protein] + 2 oxidized [2Fe-2S]-[ferredoxin] + 2 S-adenosyl-L-methionine + 4 H(+) = [[Fe-S] cluster scaffold protein] + N(6)-[(R)-dihydrolipoyl]-L-lysyl-[protein] + 4 Fe(3+) + 2 hydrogen sulfide + 2 5'-deoxyadenosine + 2 L-methionine + 2 reduced [2Fe-2S]-[ferredoxin]. The protein operates within protein modification; protein lipoylation via endogenous pathway; protein N(6)-(lipoyl)lysine from octanoyl-[acyl-carrier-protein]: step 2/2. In terms of biological role, catalyzes the radical-mediated insertion of two sulfur atoms into the C-6 and C-8 positions of the octanoyl moiety bound to the lipoyl domains of lipoate-dependent enzymes, thereby converting the octanoylated domains into lipoylated derivatives. The sequence is that of Lipoyl synthase, mitochondrial from Neurospora crassa (strain ATCC 24698 / 74-OR23-1A / CBS 708.71 / DSM 1257 / FGSC 987).